Reading from the N-terminus, the 385-residue chain is ATP phosphoribosyltransferase regulatory subunit (385 aa).

This sequence belongs to the class-II aminoacyl-tRNA synthetase family. HisZ subfamily. Heteromultimer composed of HisG and HisZ subunits.

Its subcellular location is the cytoplasm. It participates in amino-acid biosynthesis; L-histidine biosynthesis; L-histidine from 5-phospho-alpha-D-ribose 1-diphosphate: step 1/9. Its function is as follows. Required for the first step of histidine biosynthesis. May allow the feedback regulation of ATP phosphoribosyltransferase activity by histidine. This is ATP phosphoribosyltransferase regulatory subunit from Laribacter hongkongensis (strain HLHK9).